Consider the following 421-residue polypeptide: UDP-N-acetylglucosamine 1-carboxyvinyltransferase (421 aa).

A phosphoenolpyruvate-binding site is contributed by 22-23 (KN). Position 94 (arginine 94) interacts with UDP-N-acetyl-alpha-D-glucosamine. Cysteine 118 functions as the Proton donor in the catalytic mechanism. The residue at position 118 (cysteine 118) is a 2-(S-cysteinyl)pyruvic acid O-phosphothioketal. UDP-N-acetyl-alpha-D-glucosamine-binding positions include 123–127 (RPMDL), aspartate 308, and isoleucine 330.

This sequence belongs to the EPSP synthase family. MurA subfamily.

The protein resides in the cytoplasm. It catalyses the reaction phosphoenolpyruvate + UDP-N-acetyl-alpha-D-glucosamine = UDP-N-acetyl-3-O-(1-carboxyvinyl)-alpha-D-glucosamine + phosphate. It functions in the pathway cell wall biogenesis; peptidoglycan biosynthesis. In terms of biological role, cell wall formation. Adds enolpyruvyl to UDP-N-acetylglucosamine. This Ruegeria pomeroyi (strain ATCC 700808 / DSM 15171 / DSS-3) (Silicibacter pomeroyi) protein is UDP-N-acetylglucosamine 1-carboxyvinyltransferase.